A 618-amino-acid chain; its full sequence is 1-deoxy-D-xylulose-5-phosphate synthase (618 aa).

Thiamine diphosphate contacts are provided by residues His-74 and 115-117; that span reads GHS. Asp-146 serves as a coordination point for Mg(2+). Thiamine diphosphate contacts are provided by residues 147-148, Asn-175, Tyr-286, and Glu-366; that span reads GA. Asn-175 contributes to the Mg(2+) binding site.

This sequence belongs to the transketolase family. DXPS subfamily. In terms of assembly, homodimer. It depends on Mg(2+) as a cofactor. The cofactor is thiamine diphosphate.

It carries out the reaction D-glyceraldehyde 3-phosphate + pyruvate + H(+) = 1-deoxy-D-xylulose 5-phosphate + CO2. It participates in metabolic intermediate biosynthesis; 1-deoxy-D-xylulose 5-phosphate biosynthesis; 1-deoxy-D-xylulose 5-phosphate from D-glyceraldehyde 3-phosphate and pyruvate: step 1/1. In terms of biological role, catalyzes the acyloin condensation reaction between C atoms 2 and 3 of pyruvate and glyceraldehyde 3-phosphate to yield 1-deoxy-D-xylulose-5-phosphate (DXP). This is 1-deoxy-D-xylulose-5-phosphate synthase from Clostridium tetani (strain Massachusetts / E88).